Consider the following 332-residue polypeptide: Ribosomal RNA small subunit methyltransferase C (332 aa).

It belongs to the methyltransferase superfamily. RsmC family. Monomer.

It is found in the cytoplasm. It carries out the reaction guanosine(1207) in 16S rRNA + S-adenosyl-L-methionine = N(2)-methylguanosine(1207) in 16S rRNA + S-adenosyl-L-homocysteine + H(+). Specifically methylates the guanine in position 1207 of 16S rRNA in the 30S particle. The protein is Ribosomal RNA small subunit methyltransferase C of Pseudomonas syringae pv. syringae (strain B728a).